The primary structure comprises 365 residues: Isopentenyl-diphosphate delta-isomerase (365 aa).

Position 8–9 (8–9 (RK)) interacts with substrate. FMN is bound by residues 67–69 (SIT), serine 97, and asparagine 126. Substrate is bound at residue 97–99 (SQR). Position 160 (glutamine 160) interacts with substrate. Residue glutamate 161 participates in Mg(2+) binding. FMN-binding positions include lysine 192, threonine 222, 272–274 (GVR), and 293–294 (AL).

It belongs to the IPP isomerase type 2 family. In terms of assembly, homooctamer. Dimer of tetramers. FMN serves as cofactor. The cofactor is NADPH. It depends on Mg(2+) as a cofactor.

It is found in the cytoplasm. The catalysed reaction is isopentenyl diphosphate = dimethylallyl diphosphate. In terms of biological role, involved in the biosynthesis of isoprenoids. Catalyzes the 1,3-allylic rearrangement of the homoallylic substrate isopentenyl (IPP) to its allylic isomer, dimethylallyl diphosphate (DMAPP). This Methanosarcina acetivorans (strain ATCC 35395 / DSM 2834 / JCM 12185 / C2A) protein is Isopentenyl-diphosphate delta-isomerase.